The chain runs to 387 residues: tRNA pseudouridine synthase B (387 aa).

Asp-43 serves as the catalytic Nucleophile.

The protein belongs to the pseudouridine synthase TruB family. Type 1 subfamily.

The enzyme catalyses uridine(55) in tRNA = pseudouridine(55) in tRNA. Responsible for synthesis of pseudouridine from uracil-55 in the psi GC loop of transfer RNAs. This Bifidobacterium longum (strain NCC 2705) protein is tRNA pseudouridine synthase B.